The primary structure comprises 431 residues: Homeobox protein knotted-1-like 3 (431 aa).

The disordered stretch occupies residues 15–47 (NHFTDQHQPPPPQPPPPPPQQQQHFQEAPPPNW). Residues 22 to 34 (QPPPPQPPPPPPQ) show a composition bias toward pro residues. An ELK domain is found at 322 to 342 (ELKHELKQGYKEKIVDIREEI). Positions 343–406 (LRKRRAGKLP…NQRKRNWHSN (64 aa)) form a DNA-binding region, homeobox; TALE-type. Residues 402–431 (NWHSNPSSSTVLKNKRKSNAGDNSGRERFA) are disordered. Over residues 404–413 (HSNPSSSTVL) the composition is skewed to polar residues.

The protein belongs to the TALE/KNOX homeobox family. May form heterodimeric complex with the TALE/BELL proteins. Interacts with OFP1, OFP2, OFP4, OFP12 and OFP14. Interacts with KNATM-B.

It is found in the nucleus. In Arabidopsis thaliana (Mouse-ear cress), this protein is Homeobox protein knotted-1-like 3 (KNAT3).